The primary structure comprises 179 residues: uncharacterized protein (179 aa).

Helical transmembrane passes span 33–53, 63–83, 89–109, and 115–135; these read HIIA…VILD, VMFI…MLVL, ITAS…FVLT, and FSPF…EYFF.

The protein localises to the cell membrane. This is an uncharacterized protein from Bacillus subtilis (strain 168).